A 1389-amino-acid chain; its full sequence is DNA-directed RNA polymerase subunit beta' (1389 aa).

Zn(2+) contacts are provided by cysteine 73, cysteine 75, cysteine 88, and cysteine 91. Mg(2+) contacts are provided by aspartate 464, aspartate 466, and aspartate 468. Zn(2+) is bound by residues cysteine 810, cysteine 884, cysteine 891, and cysteine 894.

The protein belongs to the RNA polymerase beta' chain family. The RNAP catalytic core consists of 2 alpha, 1 beta, 1 beta' and 1 omega subunit. When a sigma factor is associated with the core the holoenzyme is formed, which can initiate transcription. It depends on Mg(2+) as a cofactor. The cofactor is Zn(2+).

It carries out the reaction RNA(n) + a ribonucleoside 5'-triphosphate = RNA(n+1) + diphosphate. Its function is as follows. DNA-dependent RNA polymerase catalyzes the transcription of DNA into RNA using the four ribonucleoside triphosphates as substrates. The sequence is that of DNA-directed RNA polymerase subunit beta' from Pelagibacter ubique (strain HTCC1062).